Reading from the N-terminus, the 299-residue chain is Ribosomal RNA small subunit methyltransferase H (299 aa).

S-adenosyl-L-methionine contacts are provided by residues 35 to 37 (GGH), Asp-54, Tyr-80, Asp-101, and Gln-108.

Belongs to the methyltransferase superfamily. RsmH family.

It is found in the cytoplasm. The catalysed reaction is cytidine(1402) in 16S rRNA + S-adenosyl-L-methionine = N(4)-methylcytidine(1402) in 16S rRNA + S-adenosyl-L-homocysteine + H(+). In terms of biological role, specifically methylates the N4 position of cytidine in position 1402 (C1402) of 16S rRNA. The protein is Ribosomal RNA small subunit methyltransferase H of Coprothermobacter proteolyticus (strain ATCC 35245 / DSM 5265 / OCM 4 / BT).